A 376-amino-acid chain; its full sequence is 26S proteasome non-ATPase regulatory subunit 13 (376 aa).

The PCI domain occupies 171 to 338 (SYYKDALRFL…KRVHMTWVQP (168 aa)). The residue at position 298 (Lys298) is an N6-acetyllysine.

This sequence belongs to the proteasome subunit S11 family. As to quaternary structure, component of the 19S proteasome regulatory particle complex. The 26S proteasome consists of a 20S core particle (CP) and two 19S regulatory subunits (RP). The regulatory particle is made of a lid composed of 9 subunits including PSMD13, a base containing 6 ATPases and few additional components.

Functionally, component of the 26S proteasome, a multiprotein complex involved in the ATP-dependent degradation of ubiquitinated proteins. This complex plays a key role in the maintenance of protein homeostasis by removing misfolded or damaged proteins, which could impair cellular functions, and by removing proteins whose functions are no longer required. Therefore, the proteasome participates in numerous cellular processes, including cell cycle progression, apoptosis, or DNA damage repair. This Homo sapiens (Human) protein is 26S proteasome non-ATPase regulatory subunit 13 (PSMD13).